We begin with the raw amino-acid sequence, 891 residues long: Probable serine/threonine-protein kinase mkcC (891 aa).

Disordered stretches follow at residues 24–70 (IELN…TATI), 85–121 (ANNNTNQLNKSTSSSSSLNNNKNEDNKSVTASIAPSS), 264–435 (DDPQ…AREK), 495–526 (NSLGSSINKNNSNNTTTTTTTTNTNNKSPEVS), and 565–588 (TTASQSSQAPYHPSHNGNEEDDYD). Low complexity predominate over residues 29-41 (QEEQQQPEQQEQP). Positions 45–58 (EELKDNNEKIKTSE) are enriched in basic and acidic residues. Composition is skewed to low complexity over residues 61–70 (TTTTTTTATI), 86–105 (NNNTNQLNKSTSSSSSLNNN), 297–314 (STSNTTGKNTGKNSTTGK), 322–360 (SNSSNVPPSPVLASSASPSPKLKSSSSSIRNSGAISGTS), and 379–397 (TTGNSTTTTTTTTSTTTSS). Residues 422-432 (RKRKEQKRSRA) show a composition bias toward basic residues. Over residues 495–522 (NSLGSSINKNNSNNTTTTTTTTNTNNKS) the composition is skewed to low complexity. A Protein kinase domain is found at 616-864 (YKNLKQIGSG…AEQLLKHPWI (249 aa)). ATP is bound by residues 622–630 (IGSGGFGSV) and Lys-645. The active-site Proton acceptor is the Asp-735.

This sequence belongs to the protein kinase superfamily. STE Ser/Thr protein kinase family. STE20 subfamily. It depends on Mg(2+) as a cofactor.

It carries out the reaction L-seryl-[protein] + ATP = O-phospho-L-seryl-[protein] + ADP + H(+). It catalyses the reaction L-threonyl-[protein] + ATP = O-phospho-L-threonyl-[protein] + ADP + H(+). The polypeptide is Probable serine/threonine-protein kinase mkcC (Dictyostelium discoideum (Social amoeba)).